The following is a 294-amino-acid chain: Bifunctional protein FolD (294 aa).

Residues 166 to 168 (GRS), Ser191, and Ile232 each bind NADP(+).

It belongs to the tetrahydrofolate dehydrogenase/cyclohydrolase family. Homodimer.

The enzyme catalyses (6R)-5,10-methylene-5,6,7,8-tetrahydrofolate + NADP(+) = (6R)-5,10-methenyltetrahydrofolate + NADPH. It carries out the reaction (6R)-5,10-methenyltetrahydrofolate + H2O = (6R)-10-formyltetrahydrofolate + H(+). Its pathway is one-carbon metabolism; tetrahydrofolate interconversion. Functionally, catalyzes the oxidation of 5,10-methylenetetrahydrofolate to 5,10-methenyltetrahydrofolate and then the hydrolysis of 5,10-methenyltetrahydrofolate to 10-formyltetrahydrofolate. The sequence is that of Bifunctional protein FolD from Afipia carboxidovorans (strain ATCC 49405 / DSM 1227 / KCTC 32145 / OM5) (Oligotropha carboxidovorans).